Reading from the N-terminus, the 100-residue chain is Urease subunit gamma 2 (100 aa).

Belongs to the urease gamma subunit family. In terms of assembly, heterotrimer of UreA (gamma), UreB (beta) and UreC (alpha) subunits. Three heterotrimers associate to form the active enzyme.

The protein localises to the cytoplasm. It catalyses the reaction urea + 2 H2O + H(+) = hydrogencarbonate + 2 NH4(+). It functions in the pathway nitrogen metabolism; urea degradation; CO(2) and NH(3) from urea (urease route): step 1/1. The polypeptide is Urease subunit gamma 2 (Psychrobacter cryohalolentis (strain ATCC BAA-1226 / DSM 17306 / VKM B-2378 / K5)).